A 467-amino-acid polypeptide reads, in one-letter code: ATP synthase subunit beta (467 aa).

156 to 163 (GGAGVGKT) serves as a coordination point for ATP.

It belongs to the ATPase alpha/beta chains family. F-type ATPases have 2 components, CF(1) - the catalytic core - and CF(0) - the membrane proton channel. CF(1) has five subunits: alpha(3), beta(3), gamma(1), delta(1), epsilon(1). CF(0) has three main subunits: a(1), b(2) and c(9-12). The alpha and beta chains form an alternating ring which encloses part of the gamma chain. CF(1) is attached to CF(0) by a central stalk formed by the gamma and epsilon chains, while a peripheral stalk is formed by the delta and b chains.

The protein resides in the cell inner membrane. It carries out the reaction ATP + H2O + 4 H(+)(in) = ADP + phosphate + 5 H(+)(out). In terms of biological role, produces ATP from ADP in the presence of a proton gradient across the membrane. The catalytic sites are hosted primarily by the beta subunits. This chain is ATP synthase subunit beta, found in Cupriavidus pinatubonensis (strain JMP 134 / LMG 1197) (Cupriavidus necator (strain JMP 134)).